We begin with the raw amino-acid sequence, 229 residues long: Probable coenzyme A transferase subunit alpha (229 aa).

Residue 26 to 32 (GGFGGVG) participates in CoA binding.

The protein belongs to the 3-oxoacid CoA-transferase subunit A family. Heterodimer of a subunit alpha and a subunit beta.

The sequence is that of Probable coenzyme A transferase subunit alpha (yodS) from Bacillus subtilis (strain 168).